We begin with the raw amino-acid sequence, 446 residues long: Protein adenylyltransferase FICD (446 aa).

Topologically, residues methionine 1–arginine 18 are cytoplasmic. Residues alanine 19–glutamate 39 form a helical; Signal-anchor for type II membrane protein membrane-spanning segment. Topologically, residues histidine 40–threonine 446 are lumenal. TPR repeat units lie at residues alanine 94 to histidine 127 and valine 128 to asparagine 161. The short motif at threonine 218 to glycine 223 is the Inhibitory (S/T)XXXE(G/N) motif element. Glutamate 222 contacts ATP. The N-linked (GlcNAc...) asparagine glycan is linked to asparagine 263. One can recognise a Fido domain in the interval valine 273–lysine 408. Residue valine 304–histidine 307 participates in ATP binding. Residue histidine 351 is part of the active site. ATP is bound by residues aspartate 355 to arginine 362, tyrosine 387 to tyrosine 388, and asparagine 395.

Belongs to the fic family. In terms of assembly, homodimer. The cofactor is Mg(2+). It depends on Mn(2+) as a cofactor.

It is found in the endoplasmic reticulum membrane. The enzyme catalyses L-tyrosyl-[protein] + ATP = O-(5'-adenylyl)-L-tyrosyl-[protein] + diphosphate. It carries out the reaction 3-O-(5'-adenylyl)-L-threonyl-[protein] + H2O = L-threonyl-[protein] + AMP + H(+). It catalyses the reaction L-threonyl-[protein] + ATP = 3-O-(5'-adenylyl)-L-threonyl-[protein] + diphosphate. With respect to regulation, the side chain of Glu-222 determines which of the two opposing activities (AMPylase or de-AMPylase) will take place. In response to endoplasmic reticulum stress, mediates de-AMPylase activity. Adenylyltransferase activity is inhibited by the inhibitory helix present at the N-terminus: Glu-222 binds ATP and competes with ATP-binding at Arg-362, thereby preventing adenylyltransferase activity. In unstressed cells, disengagement of Glu-222 promotes adenylyltransferase activity. Activation dissociates ATP-binding from Glu-222, allowing ordered binding of the entire ATP moiety with the alpha-phosphate in an orientation that is productive for accepting an incoming target hydroxyl side chain. In terms of biological role, protein that can both mediate the addition of adenosine 5'-monophosphate (AMP) to specific residues of target proteins (AMPylation), and the removal of the same modification from target proteins (de-AMPylation), depending on the context. The side chain of Glu-222 determines which of the two opposing activities (AMPylase or de-AMPylase) will take place. Acts as a key regulator of the ERN1/IRE1-mediated unfolded protein response (UPR) by mediating AMPylation or de-AMPylation of HSPA5/BiP. In unstressed cells, acts as an adenylyltransferase by mediating AMPylation of HSPA5/BiP at 'Thr-518', thereby inactivating it. In response to endoplasmic reticulum stress, acts as a phosphodiesterase by mediating removal of ATP (de-AMPylation) from HSPA5/BiP at 'Thr-518', leading to restore HSPA5/BiP activity. The polypeptide is Protein adenylyltransferase FICD (Xenopus tropicalis (Western clawed frog)).